The primary structure comprises 446 residues: MLKHFARWRLGSQLLKGCAAPVRQASKTSSAENLIAGTEEPQKKFVNPFSQPAPALSNDTISENKEERDKRLKVLQLEADIAHQEGRRVPSLEFFKDHHWEHVLTLPTKSARIKYFGYLWQIEMKKEADQRKKAERAKEAERRVAEMRKEREENTHIIYGLGHTSLFLRIYDTTINHWQNNRLTRAMQFAPKMVLDCSYDEHMNNREATYAAKQLMMCFAENRMNDEPFDLHYCNTQMDSRCMQSLQRYIPTMHNPEFPINLHSKCFTELFPKQNLVYLTPHCREDLVTYNPDDIYIVGAMVDTMNNEPLSLAKAKRLGLRMARLPLDRYLQWGSGSGKSLTLNQMINIMLDLKKTGDWDTALKHVPRRKVVQNEFQPRREKDHWSTGTRARKLNMRIDHLFDFDENRRQATSYATPQNVRQRREGLEFQLDTWATGKQKKKQRQN.

Residues 1–24 constitute a mitochondrion transit peptide; it reads MLKHFARWRLGSQLLKGCAAPVRQ. The segment at 41–67 is disordered; that stretch reads PQKKFVNPFSQPAPALSNDTISENKEE. A phosphoserine mark is found at Ser50 and Ser57. Thr60 is subject to Phosphothreonine. Ser62 is subject to Phosphoserine. Residues 119–158 adopt a coiled-coil conformation; the sequence is LWQIEMKKEADQRKKAERAKEAERRVAEMRKEREENTHII. The SAM-dependent MTase TRM10-type domain maps to 179–373; sequence QNNRLTRAMQ…KHVPRRKVVQ (195 aa).

This sequence belongs to the class IV-like SAM-binding methyltransferase superfamily. TRM10 family. As to quaternary structure, component of mitochondrial ribonuclease P, a complex composed of rswl/MRPP1, scu/MRPP2 and mldr/MRPP3.

Its subcellular location is the mitochondrion. Its function is as follows. Mitochondrial tRNA N1-methyltransferase involved in mitochondrial tRNA maturation. Component of mitochondrial ribonuclease P, a complex composed of rswl/MRPP1, scu/MRPP2 and mldr/MRPP3., which cleaves tRNA molecules in their 5'-ends. Essential for the structural and functional integrity of mitochondria. Function is essential for pupal development. In Drosophila melanogaster (Fruit fly), this protein is Mitochondrial ribonuclease P protein 1 homolog.